Here is a 149-residue protein sequence, read N- to C-terminus: Glutamate mutase sigma subunit (149 aa).

The B12-binding domain maps to 3 to 140 (KATLVIGVIG…AHDINQRHDV (138 aa)). Adenosylcob(III)alamin contacts are provided by residues 13–17 (ADCHA), His-16, 61–63 (SSI), and 93–97 (NLVVG).

Belongs to the methylaspartate mutase GlmS subunit family. As to quaternary structure, heterotetramer composed of 2 epsilon subunits (GlmE) and 2 sigma subunits (GlmS). GlmE exists as a homodimer and GlmS as a monomer. The cofactor is adenosylcob(III)alamin.

It catalyses the reaction (2S,3S)-3-methyl-L-aspartate = L-glutamate. The protein operates within amino-acid degradation; L-glutamate degradation via mesaconate pathway; acetate and pyruvate from L-glutamate: step 1/4. Catalyzes the carbon skeleton rearrangement of L-glutamate to L-threo-3-methylaspartate ((2S,3S)-3-methylaspartate). The polypeptide is Glutamate mutase sigma subunit (Escherichia coli O157:H7).